A 353-amino-acid polypeptide reads, in one-letter code: UDP-N-acetylglucosamine--N-acetylmuramyl-(pentapeptide) pyrophosphoryl-undecaprenol N-acetylglucosamine transferase (353 aa).

UDP-N-acetyl-alpha-D-glucosamine-binding positions include 11-13 (SAG), R164, S194, and Q289.

This sequence belongs to the glycosyltransferase 28 family. MurG subfamily.

The protein localises to the cell membrane. It catalyses the reaction di-trans,octa-cis-undecaprenyl diphospho-N-acetyl-alpha-D-muramoyl-L-alanyl-D-glutamyl-meso-2,6-diaminopimeloyl-D-alanyl-D-alanine + UDP-N-acetyl-alpha-D-glucosamine = di-trans,octa-cis-undecaprenyl diphospho-[N-acetyl-alpha-D-glucosaminyl-(1-&gt;4)]-N-acetyl-alpha-D-muramoyl-L-alanyl-D-glutamyl-meso-2,6-diaminopimeloyl-D-alanyl-D-alanine + UDP + H(+). It participates in cell wall biogenesis; peptidoglycan biosynthesis. Functionally, cell wall formation. Catalyzes the transfer of a GlcNAc subunit on undecaprenyl-pyrophosphoryl-MurNAc-pentapeptide (lipid intermediate I) to form undecaprenyl-pyrophosphoryl-MurNAc-(pentapeptide)GlcNAc (lipid intermediate II). The polypeptide is UDP-N-acetylglucosamine--N-acetylmuramyl-(pentapeptide) pyrophosphoryl-undecaprenol N-acetylglucosamine transferase (Clostridium kluyveri (strain ATCC 8527 / DSM 555 / NBRC 12016 / NCIMB 10680 / K1)).